The following is a 142-amino-acid chain: uncharacterized protein (142 aa).

The protein resides in the mitochondrion. This is an uncharacterized protein from Mus musculus (Mouse).